The primary structure comprises 722 residues: Polyribonucleotide nucleotidyltransferase (722 aa).

Mg(2+) contacts are provided by D487 and D493. Residues 554–613 enclose the KH domain; the sequence is PRMVSFKIHPDKIREVIGKGGATIQALTKETGCSIDIKDDGTVTIASTSAEGMAEAKARI. One can recognise an S1 motif domain in the interval 623-691; it reads GKIYEGPVVK…ERGRLRLSLK (69 aa).

The protein belongs to the polyribonucleotide nucleotidyltransferase family. It depends on Mg(2+) as a cofactor.

Its subcellular location is the cytoplasm. It catalyses the reaction RNA(n+1) + phosphate = RNA(n) + a ribonucleoside 5'-diphosphate. Its function is as follows. Involved in mRNA degradation. Catalyzes the phosphorolysis of single-stranded polyribonucleotides processively in the 3'- to 5'-direction. The protein is Polyribonucleotide nucleotidyltransferase of Polynucleobacter necessarius subsp. necessarius (strain STIR1).